Reading from the N-terminus, the 454-residue chain is Cholesterol 7-desaturase nvd (454 aa).

Transmembrane regions (helical) follow at residues 13-33 (VLCP…LGAG) and 47-67 (TTLS…LWGW). In terms of domain architecture, Rieske spans 117-221 (WYRALDSHLL…SCELNGMVFV (105 aa)). 4 residues coordinate [2Fe-2S] cluster: cysteine 158, histidine 160, cysteine 178, and histidine 181.

It belongs to the cholesterol 7-desaturase family. [2Fe-2S] cluster is required as a cofactor.

The protein resides in the membrane. The catalysed reaction is cholesterol + NADPH + O2 + H(+) = 7-dehydrocholesterol + NADP(+) + 2 H2O. The enzyme catalyses cholesterol + NADH + O2 + H(+) = 7-dehydrocholesterol + NAD(+) + 2 H2O. The protein operates within steroid hormone biosynthesis; dafachronic acid biosynthesis. Its function is as follows. Catalyzes the production of 7-dehydrocholesterol (7-DHC or cholesta-5,7-dien-3beta-ol) by inserting a double bond (desaturating) at the C7-C8 single bond of cholesterol. This reaction is the first step in the synthesis of the steroid hormone Delta(7)-dafachronic acid. This is Cholesterol 7-desaturase nvd (nvd) from Xenopus laevis (African clawed frog).